Here is a 228-residue protein sequence, read N- to C-terminus: A-type ATP synthase subunit D (228 aa).

A compositionally biased stretch (basic and acidic residues) spans 205–214; that stretch reads KKEEEEKAEA. Residues 205–228 form a disordered region; sequence KKEEEEKAEAAAEAAAVEDPEPAD.

Belongs to the V-ATPase D subunit family. As to quaternary structure, has multiple subunits with at least A(3), B(3), C, D, E, F, H, I and proteolipid K(x).

It localises to the cell membrane. Functionally, component of the A-type ATP synthase that produces ATP from ADP in the presence of a proton gradient across the membrane. This is A-type ATP synthase subunit D from Halorubrum lacusprofundi (strain ATCC 49239 / DSM 5036 / JCM 8891 / ACAM 34).